A 196-amino-acid chain; its full sequence is Homeobox protein XENK-2 (196 aa).

The segment at 48–72 is disordered; the sequence is PSADESPDNDKELSSNPDSGKKRKR. The segment at residues 69 to 128 is a DNA-binding region (homeobox); that stretch reads KRKRRVLFSKAQTYELERRFRQQRYLSAPEREHLASLIRLTPTQVKIWFQNHRYKMKRAR.

Belongs to the NK-2 homeobox family. As to expression, forebrain and midbrain.

Its subcellular location is the nucleus. In terms of biological role, defines dorsal-ventral domains in developing brain. May play a role in defining positional information along the anterior-posterior (a/p) axis and the dorsal-ventral (d/v) axis of the developing nervous system. May be involved in determining positional or boundary information rather than determining a given cell type. In Xenopus laevis (African clawed frog), this protein is Homeobox protein XENK-2.